The sequence spans 319 residues: Ankyrin repeat domain-containing protein 1 (319 aa).

Positions 46–65 (KTLPANSVKQGEEQRKSEKL) are disordered. The stretch at 53–89 (VKQGEEQRKSEKLREAELKKKKLEQRSKLENLEDLEI) forms a coiled coil. Over residues 55-65 (QGEEQRKSEKL) the composition is skewed to basic and acidic residues. ANK repeat units follow at residues 152 to 181 (YKRTALHRACLEGHLAIVEKLMEAGAQIEF), 185 to 214 (LESTAIHWACRGGNADVLKLLLNKGAKISA), 218 to 247 (LLSTALHVAVRTGHYECAEHLIACEADLNA), 251 to 280 (EGDTPLHDAVRLNRYKMIRLLMTFGADLKV), and 284 to 315 (AGKTPMDLVLHWQSGTKAIFDSLKENAYKNSR).

Interacts with TTN/titin and YBX1. Expressed in heart, cardiac muscle.

The protein localises to the nucleus. Its function is as follows. May play an important role in endothelial cell activation. May act as a nuclear transcription factor that negatively regulates the expression of cardiac genes. The protein is Ankyrin repeat domain-containing protein 1 (Ankrd1) of Mus musculus (Mouse).